The following is a 279-amino-acid chain: HTH-type transcriptional activator RhaS (279 aa).

The HTH araC/xylS-type domain occupies 175–273; sequence QALLGWLQNN…SQAPKSLRHQ (99 aa). DNA-binding regions (H-T-H motif) lie at residues 192-213 and 240-263; these read GGLA…KQHT and ITTI…RKAF.

Binds DNA as a dimer.

The protein resides in the cytoplasm. Its function is as follows. Activates expression of the rhaBAD and rhaT operons. The protein is HTH-type transcriptional activator RhaS of Pectobacterium atrosepticum (strain SCRI 1043 / ATCC BAA-672) (Erwinia carotovora subsp. atroseptica).